The chain runs to 266 residues: Dihydropteroate synthase (266 aa).

Residues 12–260 form the Pterin-binding domain; that stretch reads AAIMGILNVT…DVKANQDIVA (249 aa). Asn19 lines the Mg(2+) pocket. Residues Thr59, Asp93, Asn112, Asp176, Lys212, and 248 to 250 contribute to the (7,8-dihydropterin-6-yl)methyl diphosphate site; that span reads RVH.

It belongs to the DHPS family. As to quaternary structure, homodimer or homotrimer. It depends on Mg(2+) as a cofactor.

It catalyses the reaction (7,8-dihydropterin-6-yl)methyl diphosphate + 4-aminobenzoate = 7,8-dihydropteroate + diphosphate. It functions in the pathway cofactor biosynthesis; tetrahydrofolate biosynthesis; 7,8-dihydrofolate from 2-amino-4-hydroxy-6-hydroxymethyl-7,8-dihydropteridine diphosphate and 4-aminobenzoate: step 1/2. Catalyzes the condensation of para-aminobenzoate (pABA) with 6-hydroxymethyl-7,8-dihydropterin diphosphate (DHPt-PP) to form 7,8-dihydropteroate (H2Pte), the immediate precursor of folate derivatives. In Streptococcus pyogenes serotype M18 (strain MGAS8232), this protein is Dihydropteroate synthase (folP).